Here is an 888-residue protein sequence, read N- to C-terminus: Translation initiation factor IF-2 (888 aa).

Disordered regions lie at residues 96 to 122 (TTKQ…EAPE) and 158 to 302 (ELKE…SAPT). Composition is skewed to basic and acidic residues over residues 98–114 (KQDE…EDVS) and 158–167 (ELKEKQEKRR). The span at 181-206 (TQVQEPGSETAAVSGSVAATQPESTE) shows a compositional bias: polar residues. A compositionally biased stretch (low complexity) spans 207-225 (TAAVTPSATITVTTQTTPA). 2 stretches are compositionally biased toward basic and acidic residues: residues 226–243 (AKER…EKGE) and 253–269 (EAWK…KARG). One can recognise a tr-type G domain in the interval 390–559 (SRAPVVTVMG…LLQAEVLELK (170 aa)). The interval 399–406 (GHVDHGKT) is G1. A GTP-binding site is contributed by 399 to 406 (GHVDHGKT). The tract at residues 424–428 (GITQH) is G2. Residues 445–448 (DTPG) are G3. Residues 445 to 449 (DTPGH) and 499 to 502 (NKMD) each bind GTP. A G4 region spans residues 499–502 (NKMD). The segment at 535–537 (SAK) is G5.

Belongs to the TRAFAC class translation factor GTPase superfamily. Classic translation factor GTPase family. IF-2 subfamily.

Its subcellular location is the cytoplasm. Functionally, one of the essential components for the initiation of protein synthesis. Protects formylmethionyl-tRNA from spontaneous hydrolysis and promotes its binding to the 30S ribosomal subunits. Also involved in the hydrolysis of GTP during the formation of the 70S ribosomal complex. In Nitrosomonas eutropha (strain DSM 101675 / C91 / Nm57), this protein is Translation initiation factor IF-2.